A 784-amino-acid chain; its full sequence is DNA ligase (784 aa).

Residues 35–39 (DAEYD), 84–85 (SL), and glutamate 117 each bind NAD(+). Lysine 119 acts as the N6-AMP-lysine intermediate in catalysis. Arginine 140, glutamate 177, lysine 294, and lysine 318 together coordinate NAD(+). Zn(2+) contacts are provided by cysteine 412, cysteine 415, cysteine 442, and cysteine 448. Positions 703 to 784 (AEGLPLAGQT…FLALLRQLES (82 aa)) constitute a BRCT domain.

The protein belongs to the NAD-dependent DNA ligase family. LigA subfamily. Mg(2+) is required as a cofactor. Mn(2+) serves as cofactor.

The enzyme catalyses NAD(+) + (deoxyribonucleotide)n-3'-hydroxyl + 5'-phospho-(deoxyribonucleotide)m = (deoxyribonucleotide)n+m + AMP + beta-nicotinamide D-nucleotide.. In terms of biological role, DNA ligase that catalyzes the formation of phosphodiester linkages between 5'-phosphoryl and 3'-hydroxyl groups in double-stranded DNA using NAD as a coenzyme and as the energy source for the reaction. It is essential for DNA replication and repair of damaged DNA. This is DNA ligase from Azotobacter vinelandii (strain DJ / ATCC BAA-1303).